Reading from the N-terminus, the 432-residue chain is Enolase (432 aa).

Residue Gln-163 coordinates (2R)-2-phosphoglycerate. Residue Glu-205 is the Proton donor of the active site. 3 residues coordinate Mg(2+): Asp-241, Glu-289, and Asp-316. Lys-341, Arg-370, Ser-371, and Lys-392 together coordinate (2R)-2-phosphoglycerate. The active-site Proton acceptor is the Lys-341.

The protein belongs to the enolase family. The cofactor is Mg(2+).

The protein localises to the cytoplasm. Its subcellular location is the secreted. It is found in the cell surface. It carries out the reaction (2R)-2-phosphoglycerate = phosphoenolpyruvate + H2O. It participates in carbohydrate degradation; glycolysis; pyruvate from D-glyceraldehyde 3-phosphate: step 4/5. Functionally, catalyzes the reversible conversion of 2-phosphoglycerate (2-PG) into phosphoenolpyruvate (PEP). It is essential for the degradation of carbohydrates via glycolysis. The polypeptide is Enolase (Treponema pallidum (strain Nichols)).